The following is a 136-amino-acid chain: ATP synthase F(0) complex subunit C1, mitochondrial (136 aa).

A mitochondrion-targeting transit peptide spans 1-61; sequence MQTAGALFIS…REFQTSVVSR (61 aa). A helical membrane pass occupies residues 77-97; sequence VGVAGSGAGIGTVFGSLIIGY. K104 is subject to N6,N6,N6-trimethyllysine. The helical transmembrane segment at 112–132 threads the bilayer; that stretch reads ILGFALSEAMGLFCLMVAFLI.

This sequence belongs to the ATPase C chain family. Homooctamer; the c-ring consists of eight c subunits forming a circle, and each subunit adopts a hairpin shape. Component of the ATP synthase complex composed at least of ATP5F1A/subunit alpha, ATP5F1B/subunit beta, ATP5MC1/subunit c (homooctomer), MT-ATP6/subunit a, MT-ATP8/subunit 8, ATP5ME/subunit e, ATP5MF/subunit f, ATP5MG/subunit g, ATP5MK/subunit k, ATP5MJ/subunit j, ATP5F1C/subunit gamma, ATP5F1D/subunit delta, ATP5F1E/subunit epsilon, ATP5PF/subunit F6, ATP5PB/subunit b, ATP5PD/subunit d, ATP5PO/subunit OSCP. ATP synthase complex consists of a soluble F(1) head domain (subunits alpha(3) and beta(3)) - the catalytic core - and a membrane F(0) domain - the membrane proton channel (subunits c, a, 8, e, f, g, k and j). These two domains are linked by a central stalk (subunits gamma, delta, and epsilon) rotating inside the F1 region and a stationary peripheral stalk (subunits F6, b, d, and OSCP). Interacts with TMEM70 (homooligomer form); this interaction facilitates the oligomer formation of subunit c/ATP5MC1 (c-ring) and the c-ring membrane insertion and also protects ATP5MC1 against intramitochondrial proteolysis. Trimethylated by ATPSCKMT at Lys-104. Methylation is required for proper incorporation of the C subunit into the ATP synthase complex and mitochondrial respiration.

It localises to the mitochondrion membrane. The catalysed reaction is H(+)(in) = H(+)(out). Its function is as follows. Subunit c, of the mitochondrial membrane ATP synthase complex (F(1)F(0) ATP synthase or Complex V) that produces ATP from ADP in the presence of a proton gradient across the membrane which is generated by electron transport complexes of the respiratory chain. ATP synthase complex consist of a soluble F(1) head domain - the catalytic core - and a membrane F(1) domain - the membrane proton channel. These two domains are linked by a central stalk rotating inside the F(1) region and a stationary peripheral stalk. During catalysis, ATP synthesis in the catalytic domain of F(1) is coupled via a rotary mechanism of the central stalk subunits to proton translocation. With the subunit a (MT-ATP6), forms the proton-conducting channel in the F(0) domain, that contains two crucial half-channels (inlet and outlet) that facilitate proton movement from the mitochondrial intermembrane space (IMS) into the matrix. Protons are taken up via the inlet half-channel and released through the outlet half-channel, following a Grotthuss mechanism. The sequence is that of ATP synthase F(0) complex subunit C1, mitochondrial from Homo sapiens (Human).